Consider the following 460-residue polypeptide: Probable carboxypeptidase TRV_02791 (460 aa).

The N-terminal stretch at 1-22 (MQKTYLWALVSLLASSLVDARS) is a signal peptide. A glycan (N-linked (GlcNAc...) asparagine) is linked at asparagine 98. A Zn(2+)-binding site is contributed by aspartate 175. Residue glutamate 207 is the Proton acceptor of the active site. Glutamate 208 contributes to the Zn(2+) binding site. The N-linked (GlcNAc...) asparagine glycan is linked to asparagine 395.

It belongs to the peptidase M20A family. It depends on Zn(2+) as a cofactor.

The protein localises to the secreted. The protein is Probable carboxypeptidase TRV_02791 of Trichophyton verrucosum (strain HKI 0517).